Reading from the N-terminus, the 488-residue chain is MSQAVETRTRIKSERYESGVIPYAKMGYWDPEYSIKETDILALFRCTPQPGVDPVEAAAALAGESSTATWTVVWTDLLTACDLYRAKAYRVDPVPSAADTYFCYIAYDIDLFEEGSLANLTASIIGNIFGFKAVKALRLEDMRMPYALLKTYQGPATGLIVERERLDKFGRPLLGATVKPKLGLSGKNYGRVVFEGLKGGLDFLKDDENINSQPFMRYRERFLYSMEGVNHAAAVSGEVKGHYLNATAATMEDMYERAEFAKDLGSVIVMIDLVIGYTAIQSMAIWARKTDMILHLHRAGNSTYSRQKSHGMNFRVICKWMRMSGVDHIHAGTVVGKLEGDPLMIKGFYNTLLEFKSDINLPQGLFFAQDWASLRKCVPVASGGIHCGQMHQLINYLGDDVVLQFGGGTIGHPDGIQAGATANRVALECMVIARNEGRDYISEGPQILRDAAKTCGPLQTALDLWKDITFNYASTDTADFVETPTANR.

The substrate site is built by Asn-127 and Thr-177. The active-site Proton acceptor is the Lys-179. Substrate is bound at residue Lys-181. 3 residues coordinate Mg(2+): Lys-205, Asp-207, and Glu-208. The residue at position 205 (Lys-205) is an N6-carboxylysine. Residue His-297 is the Proton acceptor of the active site. Substrate contacts are provided by Arg-298, His-330, and Ser-382.

This sequence belongs to the RuBisCO large chain family. Type I subfamily. Heterohexadecamer of 8 large chains and 8 small chains. Mg(2+) is required as a cofactor.

The protein localises to the plastid. It localises to the chloroplast. It catalyses the reaction 2 (2R)-3-phosphoglycerate + 2 H(+) = D-ribulose 1,5-bisphosphate + CO2 + H2O. The enzyme catalyses D-ribulose 1,5-bisphosphate + O2 = 2-phosphoglycolate + (2R)-3-phosphoglycerate + 2 H(+). Functionally, ruBisCO catalyzes two reactions: the carboxylation of D-ribulose 1,5-bisphosphate, the primary event in carbon dioxide fixation, as well as the oxidative fragmentation of the pentose substrate in the photorespiration process. Both reactions occur simultaneously and in competition at the same active site. The sequence is that of Ribulose bisphosphate carboxylase large chain from Chrysotila carterae (Marine alga).